A 199-amino-acid chain; its full sequence is Large ribosomal subunit protein bL25 (199 aa).

Belongs to the bacterial ribosomal protein bL25 family. CTC subfamily. As to quaternary structure, part of the 50S ribosomal subunit; part of the 5S rRNA/L5/L18/L25 subcomplex. Contacts the 5S rRNA. Binds to the 5S rRNA independently of L5 and L18.

This is one of the proteins that binds to the 5S RNA in the ribosome where it forms part of the central protuberance. This Caulobacter sp. (strain K31) protein is Large ribosomal subunit protein bL25.